The primary structure comprises 419 residues: Endochitinase 2 (419 aa).

The N-terminal stretch at 1–18 (MHHLRALVGVGLAGLAAG) is a signal peptide. The 309-residue stretch at 35–343 (AQNVVYWGQN…QQAKSILVNG (309 aa)) folds into the GH18 domain. N153 carries N-linked (GlcNAc...) asparagine glycosylation. Catalysis depends on E173, which acts as the Proton donor. N237 and N256 each carry an N-linked (GlcNAc...) asparagine glycan. The segment covering 350-381 (GPPSSTPATAPAPTATTMPSSTSVSSPAASPT) has biased composition (low complexity). Residues 350–386 (GPPSSTPATAPAPTATTMPSSTSVSSPAASPTGGTVP) form a disordered region. Positions 383–419 (GTVPQWGQCGGEGYSGPTQCVAPYQCVKQGDWWSSCR) constitute a CBM1 domain.

Belongs to the glycosyl hydrolase 18 family. Chitinase class III subfamily.

It localises to the secreted. It carries out the reaction Random endo-hydrolysis of N-acetyl-beta-D-glucosaminide (1-&gt;4)-beta-linkages in chitin and chitodextrins.. Functionally, secreted chitinase involved in the degradation of chitin, a component of the cell walls of fungi and exoskeletal elements of some animals (including worms and arthropods). Participates in the infection process and directly acts in the penetration process of the host cuticle. This chain is Endochitinase 2 (chi2), found in Metarhizium robertsii (strain ARSEF 23 / ATCC MYA-3075) (Metarhizium anisopliae (strain ARSEF 23)).